We begin with the raw amino-acid sequence, 156 residues long: Small ribosomal subunit protein uS7 (156 aa).

The protein belongs to the universal ribosomal protein uS7 family. Part of the 30S ribosomal subunit. Contacts proteins S9 and S11.

One of the primary rRNA binding proteins, it binds directly to 16S rRNA where it nucleates assembly of the head domain of the 30S subunit. Is located at the subunit interface close to the decoding center, probably blocks exit of the E-site tRNA. The protein is Small ribosomal subunit protein uS7 of Chromobacterium violaceum (strain ATCC 12472 / DSM 30191 / JCM 1249 / CCUG 213 / NBRC 12614 / NCIMB 9131 / NCTC 9757 / MK).